Consider the following 682-residue polypeptide: Protein PilJ (682 aa).

Over 1 to 14 the chain is Cytoplasmic; that stretch reads MKKINAGNLFAGMR. Residues 15–38 traverse the membrane as a helical segment; that stretch reads SSSVIAGLFIVLIVSIVLLFANFA. The Periplasmic portion of the chain corresponds to 39–306; that stretch reads YLNTQSNHDK…DGFENLAGGR (268 aa). Residues 307-333 form a helical membrane-spanning segment; it reads SINLFAGYALGALALASIILIGLVMVR. The Cytoplasmic segment spans residues 334 to 682; sequence ETNRRLAETA…FKLPEGVEQA (349 aa). In terms of domain architecture, HAMP spans 347-398; it reads DRNQAAILRLLDEIADLADGDLTVAATVTEDFTGAIADSINYSIDQLRELVE. Positions 403 to 639 constitute a Methyl-accepting transducer domain; that stretch reads TAVQVAAAAQ…HISNTMNVIQ (237 aa).

Belongs to the methyl-accepting chemotaxis (MCP) protein family.

It is found in the cell inner membrane. In terms of biological role, may be a part of a signal-transduction system that regulates twitching motility by controlling pilus function (extension and retraction). The protein is Protein PilJ (pilJ) of Pseudomonas aeruginosa (strain ATCC 15692 / DSM 22644 / CIP 104116 / JCM 14847 / LMG 12228 / 1C / PRS 101 / PAO1).